Consider the following 225-residue polypeptide: Small ribosomal subunit protein eS1 (225 aa).

A compositionally biased stretch (acidic residues) spans 206 to 216 (PVEEPAAEEVA). A disordered region spans residues 206-225 (PVEEPAAEEVAEAPAAETQE).

It belongs to the eukaryotic ribosomal protein eS1 family.

This Methanococcus maripaludis (strain C5 / ATCC BAA-1333) protein is Small ribosomal subunit protein eS1.